The sequence spans 128 residues: Large ribosomal subunit protein uL22 (128 aa).

It belongs to the universal ribosomal protein uL22 family. Part of the 50S ribosomal subunit.

This protein binds specifically to 23S rRNA; its binding is stimulated by other ribosomal proteins, e.g. L4, L17, and L20. It is important during the early stages of 50S assembly. It makes multiple contacts with different domains of the 23S rRNA in the assembled 50S subunit and ribosome. Its function is as follows. The globular domain of the protein is located near the polypeptide exit tunnel on the outside of the subunit, while an extended beta-hairpin is found that lines the wall of the exit tunnel in the center of the 70S ribosome. The chain is Large ribosomal subunit protein uL22 from Prochlorococcus marinus (strain AS9601).